The chain runs to 321 residues: Ubiquinone biosynthesis O-methyltransferase, mitochondrial (321 aa).

4 residues coordinate S-adenosyl-L-methionine: arginine 102, glycine 135, aspartate 157, and leucine 210. Mg(2+)-binding residues include glutamate 211, glutamate 214, and histidine 215.

It belongs to the class I-like SAM-binding methyltransferase superfamily. UbiG/COQ3 family. As to quaternary structure, component of a multi-subunit COQ enzyme complex. It depends on Mg(2+) as a cofactor.

It localises to the mitochondrion inner membrane. The catalysed reaction is a 3,4-dihydroxy-5-(all-trans-polyprenyl)benzoate + S-adenosyl-L-methionine = a 4-hydroxy-3-methoxy-5-(all-trans-polyprenyl)benzoate + S-adenosyl-L-homocysteine + H(+). It carries out the reaction a 3-demethylubiquinone + S-adenosyl-L-methionine = a ubiquinone + S-adenosyl-L-homocysteine. It catalyses the reaction a 3-demethylubiquinol + S-adenosyl-L-methionine = a ubiquinol + S-adenosyl-L-homocysteine + H(+). It functions in the pathway cofactor biosynthesis; ubiquinone biosynthesis. Functionally, O-methyltransferase required for two non-consecutive steps during ubiquinone biosynthesis. Catalyzes the 2 O-methylation of 3,4-dihydroxy-5-(all-trans-polyprenyl)benzoic acid into 4-hydroxy-3-methoxy-5-(all-trans-polyprenyl)benzoic acid. Also catalyzes the last step of ubiquinone biosynthesis by mediating methylation of 3-demethylubiquinone into ubiquinone. Also able to mediate the methylation of 3-demethylubiquinol into ubiquinol. In Dictyostelium discoideum (Social amoeba), this protein is Ubiquinone biosynthesis O-methyltransferase, mitochondrial.